A 611-amino-acid polypeptide reads, in one-letter code: Dihydroxy-acid dehydratase (611 aa).

D81 is a Mg(2+) binding site. C122 serves as a coordination point for [2Fe-2S] cluster. 2 residues coordinate Mg(2+): D123 and K124. Position 124 is an N6-carboxylysine (K124). C195 is a binding site for [2Fe-2S] cluster. E491 provides a ligand contact to Mg(2+). S517 functions as the Proton acceptor in the catalytic mechanism.

This sequence belongs to the IlvD/Edd family. As to quaternary structure, homodimer. It depends on [2Fe-2S] cluster as a cofactor. Mg(2+) serves as cofactor.

It catalyses the reaction (2R)-2,3-dihydroxy-3-methylbutanoate = 3-methyl-2-oxobutanoate + H2O. The enzyme catalyses (2R,3R)-2,3-dihydroxy-3-methylpentanoate = (S)-3-methyl-2-oxopentanoate + H2O. The protein operates within amino-acid biosynthesis; L-isoleucine biosynthesis; L-isoleucine from 2-oxobutanoate: step 3/4. It participates in amino-acid biosynthesis; L-valine biosynthesis; L-valine from pyruvate: step 3/4. Functions in the biosynthesis of branched-chain amino acids. Catalyzes the dehydration of (2R,3R)-2,3-dihydroxy-3-methylpentanoate (2,3-dihydroxy-3-methylvalerate) into 2-oxo-3-methylpentanoate (2-oxo-3-methylvalerate) and of (2R)-2,3-dihydroxy-3-methylbutanoate (2,3-dihydroxyisovalerate) into 2-oxo-3-methylbutanoate (2-oxoisovalerate), the penultimate precursor to L-isoleucine and L-valine, respectively. The sequence is that of Dihydroxy-acid dehydratase from Brucella anthropi (strain ATCC 49188 / DSM 6882 / CCUG 24695 / JCM 21032 / LMG 3331 / NBRC 15819 / NCTC 12168 / Alc 37) (Ochrobactrum anthropi).